The chain runs to 208 residues: ATP-dependent Clp protease proteolytic subunit (208 aa).

The active-site Nucleophile is the Ser111. His136 is an active-site residue.

Belongs to the peptidase S14 family. In terms of assembly, fourteen ClpP subunits assemble into 2 heptameric rings which stack back to back to give a disk-like structure with a central cavity, resembling the structure of eukaryotic proteasomes.

It localises to the cytoplasm. It catalyses the reaction Hydrolysis of proteins to small peptides in the presence of ATP and magnesium. alpha-casein is the usual test substrate. In the absence of ATP, only oligopeptides shorter than five residues are hydrolyzed (such as succinyl-Leu-Tyr-|-NHMec, and Leu-Tyr-Leu-|-Tyr-Trp, in which cleavage of the -Tyr-|-Leu- and -Tyr-|-Trp bonds also occurs).. Cleaves peptides in various proteins in a process that requires ATP hydrolysis. Has a chymotrypsin-like activity. Plays a major role in the degradation of misfolded proteins. The sequence is that of ATP-dependent Clp protease proteolytic subunit from Vibrio campbellii (strain ATCC BAA-1116).